We begin with the raw amino-acid sequence, 289 residues long: uncharacterized protein (289 aa).

A signal peptide spans 1 to 23; sequence MIKNYKLLLFTTFTLFFITFVSG. N-linked (GlcNAc...) asparagine glycans are attached at residues N74, N101, N132, and N285.

The protein localises to the secreted. This is an uncharacterized protein from Dictyostelium discoideum (Social amoeba).